The primary structure comprises 61 residues: Large ribosomal subunit protein eL24 (61 aa).

Positions 7, 10, 33, and 37 each coordinate Zn(2+). The segment at Cys-7 to Cys-37 adopts a C4-type zinc-finger fold.

It belongs to the eukaryotic ribosomal protein eL24 family. As to quaternary structure, part of the 50S ribosomal subunit. Forms a cluster with proteins L3 and L14. Requires Zn(2+) as cofactor.

Binds to the 23S rRNA. The protein is Large ribosomal subunit protein eL24 of Saccharolobus islandicus (strain M.16.27) (Sulfolobus islandicus).